The following is a 278-amino-acid chain: MQYEIVSAGEDVDDERARGRRAAAPAAPSSAVPSSAALSSAALSSAAQPTGAPPATAAARRGRDLPRERLLARGPAALSDAELVALLLGSGLPGHDVFALAHTLLARFGSLRALLDAAPDDFKGLRGIGPARTAILVAVVELARRALAEKARERPLVDSPGAVDDYLRLLIGTRPREVFVCLFLDARHRLVQTEETAHGSLTRMAVYPREIVRRALALNAAALIVAHNHPSGAVRPSAADRRLTRVLRDALALVDIKLIDHFVVGASDTFSFAQAGWI.

The disordered stretch occupies residues 1 to 64; that stretch reads MQYEIVSAGE…ATAAARRGRD (64 aa). Positions 22 to 59 are enriched in low complexity; that stretch reads AAAPAAPSSAVPSSAALSSAALSSAAQPTGAPPATAAA. Residues 156 to 278 enclose the MPN domain; that stretch reads LVDSPGAVDD…TFSFAQAGWI (123 aa). Residues H227, H229, and D240 each contribute to the Zn(2+) site. The short motif at 227–240 is the JAMM motif element; the sequence is HNHPSGAVRPSAAD.

This sequence belongs to the UPF0758 family.

This chain is UPF0758 protein BURPS1106A_0984, found in Burkholderia pseudomallei (strain 1106a).